We begin with the raw amino-acid sequence, 210 residues long: MPPYTIVYFPVRGRCEAMRLLLADQGQSWKEEVVTGDSWVKGSLKSTCLYGQLPKFEDGDLILYQSNAILRHLGRSLGLYGKDQKEAALVDMANDGVEDLRCKYVTLIYTKYEEGKDDYVKALPGHLKPFETLLSQNQGGKAFIVGDQISFADYNLLDLLLIHQVLAPGCLDNFPLLSAYVARLSARPKIKAFLSSPDHVNRPINGNGKQ.

Residues 2-81 (PPYTIVYFPV…HLGRSLGLYG (80 aa)) enclose the GST N-terminal domain. Residue Y4 is modified to Phosphotyrosine; by EGFR. Glutathione-binding positions include Y8, R14, W39, K45, 52 to 53 (QL), and 65 to 66 (QS). Positions 83-204 (DQKEAALVDM…SSPDHVNRPI (122 aa)) constitute a GST C-terminal domain. 2 positions are modified to N6-succinyllysine: K103 and K116. At K128 the chain carries N6-acetyllysine.

Belongs to the GST superfamily. Pi family. As to quaternary structure, homodimer. Interacts with CDK5.

The protein resides in the cytoplasm. It localises to the mitochondrion. It is found in the nucleus. The catalysed reaction is RX + glutathione = an S-substituted glutathione + a halide anion + H(+). It catalyses the reaction prostaglandin J2 + glutathione = prostaglandin J2-S-(R)-glutathione. The enzyme catalyses prostaglandin J2 + glutathione = prostaglandin J2-S-(S)-glutathione. It carries out the reaction prostaglandin A2 + glutathione = prostaglandin A2-S-(S)-glutathione. The catalysed reaction is 11(S)-hydroxy-14(S),15(S)-epoxy-(5Z,8Z,12E)-eicosatrienoate + glutathione = (11S,15S)-dihydroxy-14(R)-S-glutathionyl-(5Z,8Z,12E)-eicosatrienoate. Its function is as follows. Conjugation of reduced glutathione to a wide number of exogenous and endogenous hydrophobic electrophiles. Involved in the formation of glutathione conjugates of both prostaglandin A2 (PGA2) and prostaglandin J2 (PGJ2). Participates in the formation of novel hepoxilin regioisomers. Negatively regulates CDK5 activity via p25/p35 translocation to prevent neurodegeneration. In Mesocricetus auratus (Golden hamster), this protein is Glutathione S-transferase P (GSTP1).